Consider the following 98-residue polypeptide: MAIESINAASVLPKVTLGETAKTDNAAGAGNTFTQMLDSMSDTQSNAQTSVSNLLTTGEGNASDVLIQMKKAESEMKTAAVIRDNVIESYKQLLNMQV.

It belongs to the FliE family.

It is found in the bacterial flagellum basal body. In Listeria monocytogenes serovar 1/2a (strain ATCC BAA-679 / EGD-e), this protein is Flagellar hook-basal body complex protein FliE.